Consider the following 124-residue polypeptide: Small ribosomal subunit protein uS12 (124 aa).

At Asp-89 the chain carries 3-methylthioaspartic acid.

It belongs to the universal ribosomal protein uS12 family. In terms of assembly, part of the 30S ribosomal subunit. Contacts proteins S8 and S17. May interact with IF1 in the 30S initiation complex.

Functionally, with S4 and S5 plays an important role in translational accuracy. Its function is as follows. Interacts with and stabilizes bases of the 16S rRNA that are involved in tRNA selection in the A site and with the mRNA backbone. Located at the interface of the 30S and 50S subunits, it traverses the body of the 30S subunit contacting proteins on the other side and probably holding the rRNA structure together. The combined cluster of proteins S8, S12 and S17 appears to hold together the shoulder and platform of the 30S subunit. The sequence is that of Small ribosomal subunit protein uS12 from Tolumonas auensis (strain DSM 9187 / NBRC 110442 / TA 4).